The primary structure comprises 69 residues: Cold shock protein CapB (69 aa).

One can recognise a CSD domain in the interval 7-66 (GTVKWFNDEKGFGFITPQSGDDLFVHFKAIQSDGFKSLKEGQQVSFIATRGQKGMQAEEV).

The protein resides in the cytoplasm. Its function is as follows. Affects cell viability at low temperatures. The sequence is that of Cold shock protein CapB (capB) from Pseudomonas fragi.